The chain runs to 192 residues: Protein GrpE (192 aa).

Residues 1-41 (MSKEEFPHEKDLKDEVTPDKAPKKDPKAAPKEEVKENPVEN) are disordered.

The protein belongs to the GrpE family. Homodimer.

It is found in the cytoplasm. Participates actively in the response to hyperosmotic and heat shock by preventing the aggregation of stress-denatured proteins, in association with DnaK and GrpE. It is the nucleotide exchange factor for DnaK and may function as a thermosensor. Unfolded proteins bind initially to DnaJ; upon interaction with the DnaJ-bound protein, DnaK hydrolyzes its bound ATP, resulting in the formation of a stable complex. GrpE releases ADP from DnaK; ATP binding to DnaK triggers the release of the substrate protein, thus completing the reaction cycle. Several rounds of ATP-dependent interactions between DnaJ, DnaK and GrpE are required for fully efficient folding. The sequence is that of Protein GrpE from Lactobacillus johnsonii (strain CNCM I-12250 / La1 / NCC 533).